The following is a 151-amino-acid chain: MSKDLARNKKAFHDYAILETFEAGIALKGSEVKALRAGRANLKDSFVRIIRGELFLLNAHISYLDTTNSYFRPDERAPRKLLMHRRQIDKLFGKVSTDGLTMVALSLYLNSKNIVKANIALAKGKNLHDKREALKQKEANIEARSALKKYI.

The protein belongs to the SmpB family.

The protein localises to the cytoplasm. Its function is as follows. Required for rescue of stalled ribosomes mediated by trans-translation. Binds to transfer-messenger RNA (tmRNA), required for stable association of tmRNA with ribosomes. tmRNA and SmpB together mimic tRNA shape, replacing the anticodon stem-loop with SmpB. tmRNA is encoded by the ssrA gene; the 2 termini fold to resemble tRNA(Ala) and it encodes a 'tag peptide', a short internal open reading frame. During trans-translation Ala-aminoacylated tmRNA acts like a tRNA, entering the A-site of stalled ribosomes, displacing the stalled mRNA. The ribosome then switches to translate the ORF on the tmRNA; the nascent peptide is terminated with the 'tag peptide' encoded by the tmRNA and targeted for degradation. The ribosome is freed to recommence translation, which seems to be the essential function of trans-translation. The polypeptide is SsrA-binding protein (Campylobacter fetus subsp. fetus (strain 82-40)).